Reading from the N-terminus, the 542-residue chain is CTP synthase (542 aa).

Residues 1–265 are amidoligase domain; the sequence is MARYVFITGG…DNEVLAAFGI (265 aa). Ser-13 is a CTP binding site. Residue Ser-13 coordinates UTP. ATP contacts are provided by residues 14-19 and Asp-71; that span reads SLGKGI. Asp-71 and Glu-139 together coordinate Mg(2+). Residues 146 to 148, 186 to 191, and Lys-222 contribute to the CTP site; these read DIE and KTKPTQ. Residues 186 to 191 and Lys-222 contribute to the UTP site; that span reads KTKPTQ. The Glutamine amidotransferase type-1 domain maps to 291 to 541; it reads TIAIVGKYTG…IEAALEQSRL (251 aa). Gly-353 serves as a coordination point for L-glutamine. Catalysis depends on Cys-380, which acts as the Nucleophile; for glutamine hydrolysis. Residues 381–384, Glu-404, and Arg-469 contribute to the L-glutamine site; that span reads FGMQ. Active-site residues include His-514 and Glu-516.

This sequence belongs to the CTP synthase family. In terms of assembly, homotetramer.

The enzyme catalyses UTP + L-glutamine + ATP + H2O = CTP + L-glutamate + ADP + phosphate + 2 H(+). It catalyses the reaction L-glutamine + H2O = L-glutamate + NH4(+). It carries out the reaction UTP + NH4(+) + ATP = CTP + ADP + phosphate + 2 H(+). It functions in the pathway pyrimidine metabolism; CTP biosynthesis via de novo pathway; CTP from UDP: step 2/2. With respect to regulation, allosterically activated by GTP, when glutamine is the substrate; GTP has no effect on the reaction when ammonia is the substrate. The allosteric effector GTP functions by stabilizing the protein conformation that binds the tetrahedral intermediate(s) formed during glutamine hydrolysis. Inhibited by the product CTP, via allosteric rather than competitive inhibition. In terms of biological role, catalyzes the ATP-dependent amination of UTP to CTP with either L-glutamine or ammonia as the source of nitrogen. Regulates intracellular CTP levels through interactions with the four ribonucleotide triphosphates. The polypeptide is CTP synthase (Rhizobium meliloti (strain 1021) (Ensifer meliloti)).